We begin with the raw amino-acid sequence, 449 residues long: MREVISIHVGQAGTQIGNACWELYCLEHGIEPDGRLSPEKTTKPLDDGFSTFFSETGSGKYVPRSIYVDLEPNVIDQVRTGTYRHLFHPEQLITGKEDAANNYARGHYTVGKELIDHVLDRIRRVADNCTGLQGFLVFHSFGGGTGSGFGALLLERLSVDYGKKSKLEFSVYPAPQVSTSVVEPYNSILTTHTTLEHSDCSFMVDNEAIYDICRRNLDIERPGYENLNRLIAQVVSSITASLRFDGSLNVDLNEFQTNLVPYPRIHFPLVTYAPLISAAKAHHEANSVAEITNACFEPNNQMVKCDPRNGKYMATCLLYRGDIVTKDVNCAVSSIRTKRTIQFVDWCPTGFKLGVCYQPPQYVPNGDLAKVNRAVCMLSNTTSIAEAWSRLDHKFDLMYSKRAFVHWYVGEGMEEGEFSEAREDLAALEKDYEEVGQDSIEGEIMEEEY.

GTP is bound by residues Gln-11, Glu-71, Ser-140, Gly-144, Thr-145, Thr-179, Asn-206, and Asn-228. Glu-71 contributes to the Mg(2+) binding site. Residue Glu-254 is part of the active site.

This sequence belongs to the tubulin family. In terms of assembly, dimer of alpha and beta chains. A typical microtubule is a hollow water-filled tube with an outer diameter of 25 nm and an inner diameter of 15 nM. Alpha-beta heterodimers associate head-to-tail to form protofilaments running lengthwise along the microtubule wall with the beta-tubulin subunit facing the microtubule plus end conferring a structural polarity. Microtubules usually have 13 protofilaments but different protofilament numbers can be found in some organisms and specialized cells. The cofactor is Mg(2+).

Its subcellular location is the cytoplasm. The protein localises to the cytoskeleton. The catalysed reaction is GTP + H2O = GDP + phosphate + H(+). Tubulin is the major constituent of microtubules, a cylinder consisting of laterally associated linear protofilaments composed of alpha- and beta-tubulin heterodimers. Microtubules grow by the addition of GTP-tubulin dimers to the microtubule end, where a stabilizing cap forms. Below the cap, tubulin dimers are in GDP-bound state, owing to GTPase activity of alpha-tubulin. The polypeptide is Tubulin alpha chain (TUB1) (Pneumocystis carinii).